Reading from the N-terminus, the 323-residue chain is tRNA dimethylallyltransferase (323 aa).

12 to 19 (GPTAAGKT) provides a ligand contact to ATP. 14-19 (TAAGKT) is a binding site for substrate. Interaction with substrate tRNA stretches follow at residues 37–40 (DSAL) and 161–165 (QRLIR).

This sequence belongs to the IPP transferase family. Monomer. Mg(2+) is required as a cofactor.

It catalyses the reaction adenosine(37) in tRNA + dimethylallyl diphosphate = N(6)-dimethylallyladenosine(37) in tRNA + diphosphate. In terms of biological role, catalyzes the transfer of a dimethylallyl group onto the adenine at position 37 in tRNAs that read codons beginning with uridine, leading to the formation of N6-(dimethylallyl)adenosine (i(6)A). This chain is tRNA dimethylallyltransferase, found in Pseudomonas entomophila (strain L48).